Consider the following 457-residue polypeptide: Acetylcholine receptor subunit alpha (457 aa).

Residues 1–20 form the signal peptide; sequence MELSTVLLLLGLCSAGLVLG. Topologically, residues 21-230 are extracellular; sequence SEHETRLVAK…ITYHFVMQRL (210 aa). Intrachain disulfides connect cysteine 148/cysteine 162 and cysteine 212/cysteine 213. Asparagine 161 is a glycosylation site (N-linked (GlcNAc...) asparagine). 3 helical membrane-spanning segments follow: residues 231–255, 263–281, and 297–316; these read PLYF…VFYL, MTLS…LVIV, and YMLF…VIVI. At 317-428 the chain is on the cytoplasmic side; sequence NTHHRSPSTH…WKYVAMVMDH (112 aa). Residues 429-447 traverse the membrane as a helical segment; it reads ILLGVFMLVCLIGTLAVFA.

It belongs to the ligand-gated ion channel (TC 1.A.9) family. Acetylcholine receptor (TC 1.A.9.1) subfamily. Alpha-1/CHRNA1 sub-subfamily. In terms of assembly, one of the alpha chains that assemble within the acetylcholine receptor, a pentamer of two alpha chains, a beta, a delta, and a gamma (in immature muscle) or epsilon (in mature muscle) chains. The muscle heteropentamer composed of alpha-1, beta-1, delta, epsilon subunits interacts with the alpha-conotoxin ImII.

The protein resides in the postsynaptic cell membrane. It is found in the cell membrane. The catalysed reaction is K(+)(in) = K(+)(out). The enzyme catalyses Na(+)(in) = Na(+)(out). In terms of biological role, upon acetylcholine binding, the AChR responds by an extensive change in conformation that affects all subunits and leads to opening of an ion-conducting channel across the plasma membrane. The protein is Acetylcholine receptor subunit alpha (Chrna1) of Mus musculus (Mouse).